The sequence spans 863 residues: Receptor-like protein 9DC1 (863 aa).

The N-terminal stretch at 1-21 (MGCVKLVFFMLYVFLFQLVSS) is a signal peptide. Topologically, residues 22–812 (SSLPHLCPED…EEDSPMISWQ (791 aa)) are extracellular. Residues 24-90 (LPHLCPEDQA…GVHCDETTGQ (67 aa)) are N-cap. N71 and N108 each carry an N-linked (GlcNAc...) asparagine glycan. An LRR 1; degenerate repeat occupies 91–114 (VIALDLRCSQLQGKFHSNSSLFQL). LRR repeat units follow at residues 115–138 (SNLK…KFGE) and 140–163 (SDLT…ISHL). The LRR 4; degenerate repeat unit spans residues 164–190 (SKLHVLLIGDQYGLSIVPHNFEPLLKN). N-linked (GlcNAc...) asparagine glycosylation is found at N190, N203, and N211. 6 LRR repeats span residues 191–213 (LTQL…SNFS), 214–237 (SHLT…VFHL), 240–262 (LEFL…KWNS), 264–286 (ASLM…SFSH), 287–311 (LTSL…LWNL), and 312–336 (TNIE…IFEK). An N-linked (GlcNAc...) asparagine glycan is attached at N261. N-linked (GlcNAc...) asparagine glycans are attached at residues N299 and N310. An LRR 11; degenerate repeat occupies 337–357 (LKKLSLFRNDNLDGGLEFLSF). LRR repeat units follow at residues 358 to 382 (NTQL…ISGL), 383 to 406 (QNLE…IFSL), 408 to 428 (SLVE…EFKS), 429 to 452 (KTLS…LLNQ), 454 to 476 (NLQL…ICNL), 477 to 500 (KTLI…VVER), 502 to 524 (EYLS…TFSV), 525 to 549 (GNIL…MINC), 551 to 572 (YLTL…WLGY), 573 to 597 (LFQL…GNTN), 599 to 623 (FMGL…ILGN), 667 to 690 (LDSN…IIGD), 691 to 714 (LVGL…SFQN), 715 to 739 (LSVL…LASL), and 741 to 759 (FLEV…IPKG). 3 N-linked (GlcNAc...) asparagine glycosylation sites follow: N378, N396, and N416. The N-linked (GlcNAc...) asparagine glycan is linked to N464. N519 carries an N-linked (GlcNAc...) asparagine glycan. N563 carries N-linked (GlcNAc...) asparagine glycosylation. 3 N-linked (GlcNAc...) asparagine glycosylation sites follow: N674, N698, and N714. N746 and N767 each carry an N-linked (GlcNAc...) asparagine glycan. The segment at 760–812 (KQFDSFGNTSYQGNDGLRGFPLSKLCGGEDQVTTPAELDQEEEEEDSPMISWQ) is C-cap/acidic domain. The chain crosses the membrane as a helical span at residues 813–833 (GVLVGYGCGLVIGLSVIYIMW). At 834 to 863 (STQYPAWFSRMDLKLEHIITTKMKKHKKRY) the chain is on the cytoplasmic side.

Belongs to the RLP family.

It localises to the cell membrane. Its function is as follows. Involved in plant defense. Confers resistance to the fungal pathogen C.fulvum through recognition of the AVR9 elicitor protein. The chain is Receptor-like protein 9DC1 from Solanum pimpinellifolium (Currant tomato).